The primary structure comprises 289 residues: Nucleotide-binding protein MS1718 (289 aa).

8-15 (GRSGAGKS) lines the ATP pocket. A GTP-binding site is contributed by 56-59 (DIRN).

Belongs to the RapZ-like family.

Its function is as follows. Displays ATPase and GTPase activities. The polypeptide is Nucleotide-binding protein MS1718 (Mannheimia succiniciproducens (strain KCTC 0769BP / MBEL55E)).